Reading from the N-terminus, the 641-residue chain is Calpain-6 (641 aa).

Residues 26 to 343 (LFCDPTFLPE…FHKLNVCRNV (318 aa)) enclose the Calpain catalytic domain. The segment at 344-495 (NNPVFGRKEL…IFSEVPVQLR (152 aa)) is domain III. Positions 498-621 (TLDMPKMSCW…YLRKKGGPTA (124 aa)) constitute a C2 domain.

It belongs to the peptidase C2 family. As to quaternary structure, interacts (via domain III) with microtubules. Interacts (via domain II) with ARHGEF2 (via the N-terminal zinc finger).

The protein resides in the cytoplasm. Its subcellular location is the perinuclear region. It localises to the cytoskeleton. The protein localises to the spindle. Functionally, microtubule-stabilizing protein that may be involved in the regulation of microtubule dynamics and cytoskeletal organization. May act as a regulator of RAC1 activity through interaction with ARHGEF2 to control lamellipodial formation and cell mobility. Does not seem to have protease activity as it has lost the active site residues. The chain is Calpain-6 (Capn6) from Mus musculus (Mouse).